Reading from the N-terminus, the 265-residue chain is Tryptophan synthase alpha chain (265 aa).

Residues E49 and D60 each act as proton acceptor in the active site.

Belongs to the TrpA family. As to quaternary structure, tetramer of two alpha and two beta chains.

The enzyme catalyses (1S,2R)-1-C-(indol-3-yl)glycerol 3-phosphate + L-serine = D-glyceraldehyde 3-phosphate + L-tryptophan + H2O. It participates in amino-acid biosynthesis; L-tryptophan biosynthesis; L-tryptophan from chorismate: step 5/5. In terms of biological role, the alpha subunit is responsible for the aldol cleavage of indoleglycerol phosphate to indole and glyceraldehyde 3-phosphate. This Cupriavidus taiwanensis (strain DSM 17343 / BCRC 17206 / CCUG 44338 / CIP 107171 / LMG 19424 / R1) (Ralstonia taiwanensis (strain LMG 19424)) protein is Tryptophan synthase alpha chain.